A 207-amino-acid polypeptide reads, in one-letter code: NKYCNIKCSKVAHTVCQTGESTKPSSKNCAKVSITSVGVTEEEKKLIVDEHNRFRQKVAQGLETRGNPGPQPAASDMNNLVWNDELAYIAQVWASQCQFFVHDKCRNTAQYQVGQNIAYSASTAAYPGVVKLIVLWENEVKDFNYNTGITKENFAKVGHYTQVVWAKTKEVGCGSIKYIEKGMKSHYLVCNYGPAGNVLGAQIYEIK.

3 disulfide bridges follow: Cys-4/Cys-16, Cys-8/Cys-105, and Cys-29/Cys-97. Residues 49 to 192 (DEHNRFRQKV…MKSHYLVCNY (144 aa)) form the SCP domain. Tyr-111 is subject to Phosphotyrosine. N-linked (Glc) (glycation) lysine glycosylation is present at Lys-141. A disulfide bond links Cys-173 and Cys-190.

This sequence belongs to the CRISP family. Venom allergen 5-like subfamily. In terms of processing, glycosylated. As to expression, expressed by the venom gland.

Its subcellular location is the secreted. The sequence is that of Venom allergen 5 from Polybia paulista (Neotropical social wasp).